Here is a 597-residue protein sequence, read N- to C-terminus: Adenine deaminase 2 (597 aa).

Belongs to the metallo-dependent hydrolases superfamily. Adenine deaminase family. The cofactor is Mn(2+).

It catalyses the reaction adenine + H2O + H(+) = hypoxanthine + NH4(+). The sequence is that of Adenine deaminase 2 from Agrobacterium fabrum (strain C58 / ATCC 33970) (Agrobacterium tumefaciens (strain C58)).